We begin with the raw amino-acid sequence, 409 residues long: Peptidase T (409 aa).

His78 is a binding site for Zn(2+). Residue Asp80 is part of the active site. Asp140 serves as a coordination point for Zn(2+). Glu174 acts as the Proton acceptor in catalysis. Zn(2+) contacts are provided by Glu175, Asp197, and His379.

The protein belongs to the peptidase M20B family. Requires Zn(2+) as cofactor.

Its subcellular location is the cytoplasm. The enzyme catalyses Release of the N-terminal residue from a tripeptide.. In terms of biological role, cleaves the N-terminal amino acid of tripeptides. This is Peptidase T from Photobacterium profundum (strain SS9).